Consider the following 155-residue polypeptide: 3-hydroxyacyl-[acyl-carrier-protein] dehydratase FabZ (155 aa).

H58 is an active-site residue.

Belongs to the thioester dehydratase family. FabZ subfamily.

It is found in the cytoplasm. The enzyme catalyses a (3R)-hydroxyacyl-[ACP] = a (2E)-enoyl-[ACP] + H2O. Functionally, involved in unsaturated fatty acids biosynthesis. Catalyzes the dehydration of short chain beta-hydroxyacyl-ACPs and long chain saturated and unsaturated beta-hydroxyacyl-ACPs. The chain is 3-hydroxyacyl-[acyl-carrier-protein] dehydratase FabZ from Rhizobium etli (strain ATCC 51251 / DSM 11541 / JCM 21823 / NBRC 15573 / CFN 42).